Reading from the N-terminus, the 955-residue chain is Leucine--tRNA ligase (955 aa).

The 'HIGH' region signature appears at 51–61; sequence PYLNGVLHAGH. The 'KMSKS' region motif lies at 647–651; it reads KLSKS. Lys-650 serves as a coordination point for ATP.

The protein belongs to the class-I aminoacyl-tRNA synthetase family.

The protein localises to the cytoplasm. The catalysed reaction is tRNA(Leu) + L-leucine + ATP = L-leucyl-tRNA(Leu) + AMP + diphosphate. The polypeptide is Leucine--tRNA ligase (Methanococcus maripaludis (strain C7 / ATCC BAA-1331)).